Here is a 240-residue protein sequence, read N- to C-terminus: MSEQDFREIARNGLWRNNPGLVQLLGLCPLLGTSNSTVNALGLGLATMLVLACSNAAVSLVRGAVSEAIRLPAFVMIIAVLTTCIELLMQAWTYELYQVLGIFIPLITTNCVILGRAEAFAAKNGVLRASFDGLLMGLGFALVLLVLGGLRELLGQGTLLADMHLLFGPAAADWKIQPFPQYQGFLLAILPPGAFIMLGLLIALKNRIDESLAERAKVQAGDVPATQRQRQRVRVTGVIE.

The next 5 helical transmembrane spans lie at 41–61, 71–91, 95–115, 130–150, and 184–204; these read LGLG…VSLV, LPAF…LMQA, ELYQ…VILG, SFDG…LGGL, and GFLL…LIAL.

Belongs to the NqrDE/RnfAE family. In terms of assembly, the complex is composed of six subunits: RnfA, RnfB, RnfC, RnfD, RnfE and RnfG.

Its subcellular location is the cell inner membrane. In terms of biological role, part of a membrane-bound complex that couples electron transfer with translocation of ions across the membrane. The sequence is that of Ion-translocating oxidoreductase complex subunit E from Pseudomonas aeruginosa (strain ATCC 15692 / DSM 22644 / CIP 104116 / JCM 14847 / LMG 12228 / 1C / PRS 101 / PAO1).